A 372-amino-acid polypeptide reads, in one-letter code: Flap endonuclease 1 (372 aa).

The N-domain stretch occupies residues 1–105 (MGVKGLNQLI…GELEKRLLRR (105 aa)). Asp-34 serves as a coordination point for Mg(2+). 2 residues coordinate DNA: Arg-47 and Arg-71. Residues Asp-87, Glu-159, Glu-161, Asp-180, and Asp-182 each contribute to the Mg(2+) site. The segment at 123–254 (EVLKFEKRLV…ATAFKLIKEH (132 aa)) is I-domain. Residue Glu-159 coordinates DNA. Residues Gly-232 and Asp-234 each coordinate DNA. Asp-234 is a binding site for Mg(2+). The segment at 339–347 (VQGRLDGFF) is interaction with PCNA. A compositionally biased stretch (basic and acidic residues) spans 353–366 (DDKKRKADPKESKA). Residues 353-372 (DDKKRKADPKESKASKKKKK) form a disordered region.

The protein belongs to the XPG/RAD2 endonuclease family. FEN1 subfamily. As to quaternary structure, interacts with PCNA. Three molecules of RAD27 bind to one PCNA trimer with each molecule binding to one PCNA monomer. PCNA stimulates the nuclease activity without altering cleavage specificity. It depends on Mg(2+) as a cofactor. Phosphorylated. Phosphorylation upon DNA damage induces relocalization to the nuclear plasma.

The protein localises to the nucleus. The protein resides in the nucleolus. It localises to the nucleoplasm. Its subcellular location is the mitochondrion. Structure-specific nuclease with 5'-flap endonuclease and 5'-3' exonuclease activities involved in DNA replication and repair. During DNA replication, cleaves the 5'-overhanging flap structure that is generated by displacement synthesis when DNA polymerase encounters the 5'-end of a downstream Okazaki fragment. It enters the flap from the 5'-end and then tracks to cleave the flap base, leaving a nick for ligation. Also involved in the long patch base excision repair (LP-BER) pathway, by cleaving within the apurinic/apyrimidinic (AP) site-terminated flap. Acts as a genome stabilization factor that prevents flaps from equilibrating into structures that lead to duplications and deletions. Also possesses 5'-3' exonuclease activity on nicked or gapped double-stranded DNA, and exhibits RNase H activity. Also involved in replication and repair of rDNA and in repairing mitochondrial DNA. The sequence is that of Flap endonuclease 1 from Candida albicans (strain WO-1) (Yeast).